Consider the following 417-residue polypeptide: Zinc-finger homeodomain protein 4 (417 aa).

The span at 1-12 (MVSILQLQTRTE) shows a compositional bias: polar residues. Disordered stretches follow at residues 1 to 22 (MVSILQLQTRTEASPASSASAA) and 31 to 50 (RQQQEQEGEEEEEEFEFQER). The segment covering 13-22 (ASPASSASAA) has biased composition (low complexity). The segment covering 36 to 46 (QEGEEEEEEFE) has biased composition (acidic residues). A ZF-HD dimerization-type; degenerate zinc finger spans residues 145–194 (YRECLKNHAAAIGGNATDGCGEFMPSGEEGSLEALKCSACGCHRNFHRKE). Disordered stretches follow at residues 281 to 309 (DEMDVSGGGGGVGRGGGSSSSSKKRFRTK) and 361 to 417 (NLAK…LKLE). The span at 286–298 (SGGGGGVGRGGGS) shows a compositional bias: gly residues. The segment at residues 303–366 (KKRFRTKFTA…NNKHNLAKKP (64 aa)) is a DNA-binding region (homeobox). Positions 368–417 (PSSPPPPPQIPPMSMPPSPPPPQIPPMSMPPSPPPMPMPMPPSPPQLKLE) are enriched in pro residues.

As to quaternary structure, homo- and heterodimer with other ZFHD proteins.

The protein resides in the nucleus. Its function is as follows. Putative transcription factor. The sequence is that of Zinc-finger homeodomain protein 4 (ZHD4) from Oryza sativa subsp. japonica (Rice).